A 159-amino-acid polypeptide reads, in one-letter code: RNA pyrophosphohydrolase (159 aa).

Residues glycine 6–lysine 149 enclose the Nudix hydrolase domain. The short motif at glycine 38–glycine 59 is the Nudix box element.

The protein belongs to the Nudix hydrolase family. RppH subfamily. It depends on a divalent metal cation as a cofactor.

Its function is as follows. Accelerates the degradation of transcripts by removing pyrophosphate from the 5'-end of triphosphorylated RNA, leading to a more labile monophosphorylated state that can stimulate subsequent ribonuclease cleavage. This chain is RNA pyrophosphohydrolase, found in Pseudomonas fluorescens (strain ATCC BAA-477 / NRRL B-23932 / Pf-5).